A 101-amino-acid chain; its full sequence is DNA-directed RNA polymerase subunit omega (101 aa).

Residues 1–13 (MSSTPAAASATPS) show a composition bias toward low complexity. The segment at 1–22 (MSSTPAAASATPSHGALPAYDT) is disordered.

The protein belongs to the RNA polymerase subunit omega family. The RNAP catalytic core consists of 2 alpha, 1 beta, 1 beta' and 1 omega subunit. When a sigma factor is associated with the core the holoenzyme is formed, which can initiate transcription.

The catalysed reaction is RNA(n) + a ribonucleoside 5'-triphosphate = RNA(n+1) + diphosphate. Its function is as follows. Promotes RNA polymerase assembly. Latches the N- and C-terminal regions of the beta' subunit thereby facilitating its interaction with the beta and alpha subunits. This chain is DNA-directed RNA polymerase subunit omega, found in Rhodococcus jostii (strain RHA1).